A 430-amino-acid chain; its full sequence is MGFQDQRSKEAFARANGVLPGGVNSPVRAFKSVGREPIFIAKGQGARLWDIDGNSYLDYVLSWGPLILGHAHPVVVGAIKAAAERGTSYGAPTEIETECAEEVIKAFPSMEMVRMVSSGTEATMSALRLARGVTGRNKIIKFEGCYHGHGDSLLIKAGSGALTFGVPTSPGVPSSVASQTIVAQYNDLEGLKEIFKECGEDIAAVILEPVTGNMGVVLPQPGFLAGLRTLTQDYGSLLIFDEVMTGFRVSYGGAQGRYQIDPDLTCLGKVIGGGLPVAAYGGKRKYMEQVAPSGPIYQAGTLSGNPLAMAAGLATLKLLQQEGVYEGLEKKTARLAEGLQSIAQELGFPIWVNSVGAMFSAFFTDQPVIDFKSACSSDVERFGSFFRGMLERGIYLAPSQYEAVFLSAAHTDADIDYTLEQARDVLKSLG.

Lys269 is subject to N6-(pyridoxal phosphate)lysine.

The protein belongs to the class-III pyridoxal-phosphate-dependent aminotransferase family. HemL subfamily. Homodimer. Requires pyridoxal 5'-phosphate as cofactor.

The protein resides in the cytoplasm. It carries out the reaction (S)-4-amino-5-oxopentanoate = 5-aminolevulinate. It functions in the pathway porphyrin-containing compound metabolism; protoporphyrin-IX biosynthesis; 5-aminolevulinate from L-glutamyl-tRNA(Glu): step 2/2. This Desulfitobacterium hafniense (strain DSM 10664 / DCB-2) protein is Glutamate-1-semialdehyde 2,1-aminomutase.